The chain runs to 246 residues: Large ribosomal subunit protein uL3 (246 aa).

Position 151 is an N5-methylglutamine (Gln151).

Belongs to the universal ribosomal protein uL3 family. Part of the 50S ribosomal subunit. Forms a cluster with proteins L14 and L19. Post-translationally, methylated by PrmB.

Functionally, one of the primary rRNA binding proteins, it binds directly near the 3'-end of the 23S rRNA, where it nucleates assembly of the 50S subunit. The polypeptide is Large ribosomal subunit protein uL3 (Bartonella henselae (strain ATCC 49882 / DSM 28221 / CCUG 30454 / Houston 1) (Rochalimaea henselae)).